We begin with the raw amino-acid sequence, 432 residues long: Serine--tRNA ligase (432 aa).

An L-serine-binding site is contributed by 238-240 (TAE). 269–271 (RSE) lines the ATP pocket. Glu292 contributes to the L-serine binding site. 356–359 (EVSS) lines the ATP pocket. Position 392 (Ser392) interacts with L-serine.

The protein belongs to the class-II aminoacyl-tRNA synthetase family. Type-1 seryl-tRNA synthetase subfamily. As to quaternary structure, homodimer. The tRNA molecule binds across the dimer.

It localises to the cytoplasm. It catalyses the reaction tRNA(Ser) + L-serine + ATP = L-seryl-tRNA(Ser) + AMP + diphosphate + H(+). The catalysed reaction is tRNA(Sec) + L-serine + ATP = L-seryl-tRNA(Sec) + AMP + diphosphate + H(+). It participates in aminoacyl-tRNA biosynthesis; selenocysteinyl-tRNA(Sec) biosynthesis; L-seryl-tRNA(Sec) from L-serine and tRNA(Sec): step 1/1. Functionally, catalyzes the attachment of serine to tRNA(Ser). Is also able to aminoacylate tRNA(Sec) with serine, to form the misacylated tRNA L-seryl-tRNA(Sec), which will be further converted into selenocysteinyl-tRNA(Sec). This chain is Serine--tRNA ligase, found in Buchnera aphidicola subsp. Baizongia pistaciae (strain Bp).